Reading from the N-terminus, the 450-residue chain is Phosphoglucosamine mutase 2 (450 aa).

Ser-101 functions as the Phosphoserine intermediate in the catalytic mechanism. The Mg(2+) site is built by Ser-101, Asp-245, Asp-247, and Asp-249. Residue Ser-101 is modified to Phosphoserine.

The protein belongs to the phosphohexose mutase family. It depends on Mg(2+) as a cofactor. Post-translationally, activated by phosphorylation.

It catalyses the reaction alpha-D-glucosamine 1-phosphate = D-glucosamine 6-phosphate. Its function is as follows. Catalyzes the conversion of glucosamine-6-phosphate to glucosamine-1-phosphate. The chain is Phosphoglucosamine mutase 2 from Shewanella baltica (strain OS185).